The sequence spans 329 residues: DNA-directed RNA polymerase subunit alpha (329 aa).

The alpha N-terminal domain (alpha-NTD) stretch occupies residues 1–235 (MLGSVTDFLK…EQLEAFVDLR (235 aa)). Residues 249-329 (FDPILLRPVD…NWPPASIADE (81 aa)) form an alpha C-terminal domain (alpha-CTD) region.

The protein belongs to the RNA polymerase alpha chain family. In terms of assembly, homodimer. The RNAP catalytic core consists of 2 alpha, 1 beta, 1 beta' and 1 omega subunit. When a sigma factor is associated with the core the holoenzyme is formed, which can initiate transcription.

The enzyme catalyses RNA(n) + a ribonucleoside 5'-triphosphate = RNA(n+1) + diphosphate. In terms of biological role, DNA-dependent RNA polymerase catalyzes the transcription of DNA into RNA using the four ribonucleoside triphosphates as substrates. The sequence is that of DNA-directed RNA polymerase subunit alpha from Aeromonas hydrophila subsp. hydrophila (strain ATCC 7966 / DSM 30187 / BCRC 13018 / CCUG 14551 / JCM 1027 / KCTC 2358 / NCIMB 9240 / NCTC 8049).